The chain runs to 526 residues: Peptide chain release factor 3 (526 aa).

In terms of domain architecture, tr-type G spans 9 to 277 (DKRRTFAIIS…GIVEWAPRPQ (269 aa)). GTP contacts are provided by residues 18–25 (SHPDAGKT), 86–90 (DTPGH), and 140–143 (NKLD).

This sequence belongs to the TRAFAC class translation factor GTPase superfamily. Classic translation factor GTPase family. PrfC subfamily.

The protein resides in the cytoplasm. In terms of biological role, increases the formation of ribosomal termination complexes and stimulates activities of RF-1 and RF-2. It binds guanine nucleotides and has strong preference for UGA stop codons. It may interact directly with the ribosome. The stimulation of RF-1 and RF-2 is significantly reduced by GTP and GDP, but not by GMP. The sequence is that of Peptide chain release factor 3 from Shewanella loihica (strain ATCC BAA-1088 / PV-4).